The sequence spans 464 residues: uncharacterized protein (464 aa).

Disordered regions lie at residues 290 to 374 (YRKQ…ERPK) and 445 to 464 (ETDD…PLEE). Residues 293 to 302 (QQQWQQQQQQ) show a composition bias toward low complexity. The segment covering 303–318 (RKVKTPIKKQEAKKKA) has biased composition (basic residues). A compositionally biased stretch (polar residues) spans 352-367 (DMKQQQQMEKGTTSKQ). Residues 445-454 (ETDDEDEENQ) are compositionally biased toward acidic residues.

This is an uncharacterized protein from Macaca fascicularis (Crab-eating macaque).